The sequence spans 101 residues: MAAKLKKGDKVVVLTGKDKGKQGEISAVFPKENKAVVDGINIAIRHQRQTQTSQGGRVAKAMPIDLSNLALLDKNGKATRVGFREEDGKKVRFAKTTGDVI.

The protein belongs to the universal ribosomal protein uL24 family. Part of the 50S ribosomal subunit.

One of two assembly initiator proteins, it binds directly to the 5'-end of the 23S rRNA, where it nucleates assembly of the 50S subunit. Functionally, one of the proteins that surrounds the polypeptide exit tunnel on the outside of the subunit. In Paracoccus denitrificans (strain Pd 1222), this protein is Large ribosomal subunit protein uL24.